Reading from the N-terminus, the 310-residue chain is Vomeronasal type-1 receptor 97 (310 aa).

At 1-19 (MNKDNILHTDTNIKITLFS) the chain is on the extracellular side. Residues 20–40 (EVSIGISANSALFFSHLFMLF) traverse the membrane as a helical segment. Residues 41–49 (EKNRSKPID) are Cytoplasmic-facing. The helical transmembrane segment at 50–70 (LYIAFLSLTQLMLLITIGLIA) threads the bilayer. At 71–93 (ADMFMSRGRWDSTTCQSLIYLHR) the chain is on the extracellular side. A disulfide bridge connects residues Cys85 and Cys172. Residues 94 to 114 (LLRGFTLCATCLLNVLWTITL) traverse the membrane as a helical segment. At 115–131 (SPRSSCLTTFKHKSPHH) the chain is on the cytoplasmic side. A helical transmembrane segment spans residues 132–152 (ISGAFLFFCVLYISFGSHLFL). Residues 153–190 (STIATPNLTSDNFMYVTQSCSFLPMSYSRTSMFSTPMA) are Extracellular-facing. Residue Asn159 is glycosylated (N-linked (GlcNAc...) asparagine). The helical transmembrane segment at 191 to 211 (IREALLIGLIGLSSGYMVAFL) threads the bilayer. At 212–238 (WRHKNQARHLHSTSLSSKVSPEQRATR) the chain is on the cytoplasmic side. The chain crosses the membrane as a helical span at residues 239 to 259 (TIMILMSFFVVLYILENVVFY). The Extracellular portion of the chain corresponds to 260-269 (SRMTFKDGSM). Residues 270 to 290 (FYCVQIIVSHSYATISPFVFI) form a helical membrane-spanning segment. Residues 291–310 (CTEKRIIKLWGSMSSRIVSI) are Cytoplasmic-facing.

Belongs to the G-protein coupled receptor 1 family. Expressed in 1-4% of neurons of the vomeronasal organ. Only one pheromone receptor gene may be expressed in a particular neuron. Not expressed in the main olfactory epithelium.

The protein resides in the cell membrane. In terms of biological role, putative pheromone receptor implicated in the regulation of social as well as reproductive behavior. This Rattus norvegicus (Rat) protein is Vomeronasal type-1 receptor 97 (Vom1r97).